Consider the following 685-residue polypeptide: Methionine--tRNA ligase (685 aa).

The 'HIGH' region signature appears at Pro15 to His25. Zn(2+) contacts are provided by Cys146, Cys149, Cys159, and Cys162. A 'KMSKS' region motif is present at residues Lys331–Ser335. Residue Lys334 participates in ATP binding. One can recognise a tRNA-binding domain in the interval Asp583–Lys685.

Belongs to the class-I aminoacyl-tRNA synthetase family. MetG type 1 subfamily. In terms of assembly, homodimer. Zn(2+) is required as a cofactor.

It localises to the cytoplasm. The enzyme catalyses tRNA(Met) + L-methionine + ATP = L-methionyl-tRNA(Met) + AMP + diphosphate. Its function is as follows. Is required not only for elongation of protein synthesis but also for the initiation of all mRNA translation through initiator tRNA(fMet) aminoacylation. The sequence is that of Methionine--tRNA ligase from Actinobacillus succinogenes (strain ATCC 55618 / DSM 22257 / CCUG 43843 / 130Z).